Here is a 449-residue protein sequence, read N- to C-terminus: Bifunctional protein GlmU (449 aa).

Residues 1-225 form a pyrophosphorylase region; it reads MLSVAILAAG…NGELQGINNR (225 aa). UDP-N-acetyl-alpha-D-glucosamine-binding positions include 7–10, Lys-21, Gln-73, and 78–79; these read LAAG and GT. Asp-103 contacts Mg(2+). The UDP-N-acetyl-alpha-D-glucosamine site is built by Gly-140, Glu-154, Asn-169, and Asn-223. Residue Asn-223 coordinates Mg(2+). Residues 226-246 are linker; that stretch reads IHLSECEECIQNSIKEKHMLN. The interval 247 to 449 is N-acetyltransferase; that stretch reads GVTFINKASC…NIENWKKKKS (203 aa). 2 residues coordinate UDP-N-acetyl-alpha-D-glucosamine: Arg-328 and Lys-346. His-358 functions as the Proton acceptor in the catalytic mechanism. Tyr-361 and Asn-372 together coordinate UDP-N-acetyl-alpha-D-glucosamine. The acetyl-CoA site is built by Ala-375, Ala-418, and Arg-435.

This sequence in the N-terminal section; belongs to the N-acetylglucosamine-1-phosphate uridyltransferase family. In the C-terminal section; belongs to the transferase hexapeptide repeat family. Homotrimer. Mg(2+) serves as cofactor.

It localises to the cytoplasm. The catalysed reaction is alpha-D-glucosamine 1-phosphate + acetyl-CoA = N-acetyl-alpha-D-glucosamine 1-phosphate + CoA + H(+). It carries out the reaction N-acetyl-alpha-D-glucosamine 1-phosphate + UTP + H(+) = UDP-N-acetyl-alpha-D-glucosamine + diphosphate. It participates in nucleotide-sugar biosynthesis; UDP-N-acetyl-alpha-D-glucosamine biosynthesis; N-acetyl-alpha-D-glucosamine 1-phosphate from alpha-D-glucosamine 6-phosphate (route II): step 2/2. Its pathway is nucleotide-sugar biosynthesis; UDP-N-acetyl-alpha-D-glucosamine biosynthesis; UDP-N-acetyl-alpha-D-glucosamine from N-acetyl-alpha-D-glucosamine 1-phosphate: step 1/1. The protein operates within bacterial outer membrane biogenesis; LPS lipid A biosynthesis. Its function is as follows. Catalyzes the last two sequential reactions in the de novo biosynthetic pathway for UDP-N-acetylglucosamine (UDP-GlcNAc). The C-terminal domain catalyzes the transfer of acetyl group from acetyl coenzyme A to glucosamine-1-phosphate (GlcN-1-P) to produce N-acetylglucosamine-1-phosphate (GlcNAc-1-P), which is converted into UDP-GlcNAc by the transfer of uridine 5-monophosphate (from uridine 5-triphosphate), a reaction catalyzed by the N-terminal domain. In Prochlorococcus marinus (strain AS9601), this protein is Bifunctional protein GlmU.